A 412-amino-acid polypeptide reads, in one-letter code: Docking protein 2 (412 aa).

A PH domain is found at 4 to 114 (GAVKQGFLYL…WVQAICLLAF (111 aa)). In terms of domain architecture, IRS-type PTB spans 147 to 252 (PHKEFAVTMR…SAQKNAAPAT (106 aa)). The segment at 246-296 (KNAAPATPQPQPATIPASLPRPDSPYSRPHDSLPPPSPTTPVPAPRPRGQE) is disordered. A Phosphotyrosine modification is found at Y271. Positions 277 to 291 (SLPPPSPTTPVPAPR) are enriched in pro residues. 2 positions are modified to phosphotyrosine: Y299 and Y345. The interval 359–412 (SPQEPRGEAWRRQATADRDPAGLQHVQPAGQDFSASGWQPGTEYDNVVLKKGPK) is disordered. Positions 361-378 (QEPRGEAWRRQATADRDP) are enriched in basic and acidic residues.

It belongs to the DOK family. Type A subfamily. Interacts with phosphorylated RASGAP and EGFR. Interacts with RET and NCK. Interacts (via PH domain) with TEK/TIE2 (tyrosine phosphorylated). In terms of assembly, (Microbial infection) Interacts with Herpes simplex virus 1 (HHV-1) protein UL46; this interaction induces DOK2 phosphorylation and subsequent degradation. Post-translationally, on immunoreceptor stimulation, phosphorylated on C-terminal tyrosine residues. Phosphorylation on Tyr-345 is required for binding to the SH2 domain of NCK. Phosphorylation on both Tyr-271 and Tyr-299 is required for interaction with RASGAP. Phosphorylated on tyrosine residues by TEK/TIE2. In terms of tissue distribution, highly expressed in peripheral blood leukocytes, lymph nodes and spleen. Lower expression in thymus, bone marrow and fetal liver.

Functionally, DOK proteins are enzymatically inert adaptor or scaffolding proteins. They provide a docking platform for the assembly of multimolecular signaling complexes. DOK2 may modulate the cellular proliferation induced by IL-4, as well as IL-2 and IL-3. May be involved in modulating Bcr-Abl signaling. Attenuates EGF-stimulated MAP kinase activation. This is Docking protein 2 (DOK2) from Homo sapiens (Human).